Reading from the N-terminus, the 476-residue chain is UDP-N-acetylmuramate--L-alanine ligase (476 aa).

123-129 serves as a coordination point for ATP; it reads GTHGKTT.

The protein belongs to the MurCDEF family.

The protein resides in the cytoplasm. The enzyme catalyses UDP-N-acetyl-alpha-D-muramate + L-alanine + ATP = UDP-N-acetyl-alpha-D-muramoyl-L-alanine + ADP + phosphate + H(+). Its pathway is cell wall biogenesis; peptidoglycan biosynthesis. Functionally, cell wall formation. The sequence is that of UDP-N-acetylmuramate--L-alanine ligase from Nitrosococcus oceani (strain ATCC 19707 / BCRC 17464 / JCM 30415 / NCIMB 11848 / C-107).